A 1107-amino-acid polypeptide reads, in one-letter code: Unconventional myosin-Ie (1107 aa).

One can recognise a Myosin motor domain in the interval 19 to 692; sequence SGVDDMVLLS…SLFLLEEMRE (674 aa). 112-119 provides a ligand contact to ATP; that stretch reads GESGAGKT. The interval 581–591 is actin-binding; that stretch reads PHYIRCIKPNE. Residues 695-724 enclose the IQ domain; that stretch reads YDGYARVIQKTWRKFVARKKYVQMREEASD. A TH1 domain is found at 730-922; that stretch reads KERRRNSINR…NKVLQVSIGP (193 aa). The tract at residues 919–1052 is disordered; the sequence is SIGPGLPKNS…KPQPKPKPQV (134 aa). 2 stretches are compositionally biased toward polar residues: residues 979-989 and 998-1012; these read NQRSNQKSLYT and RQQSTGSDRLSQTPE. The residue at position 1001 (serine 1001) is a Phosphoserine. The span at 1034–1051 shows a compositional bias: pro residues; it reads RPPPAGGRPKPQPKPKPQ. The 58-residue stretch at 1050–1107 folds into the SH3 domain; it reads PQVPQCKALYAYDAQDTDELSFNANDIIDIIKEDPSGWWTGRLRGKQGLFPNNYVTKI.

Belongs to the TRAFAC class myosin-kinesin ATPase superfamily. Myosin family. As to quaternary structure, interacts with CALM and F-actin. Interacts (via SH3 domain) with SYNJ1, DNM1 and DNM2. Interacts with ARL14EP. Interacts with CARMIL1. As to expression, detected in kidney glomeruli (at protein level). Detected in utricle.

Its subcellular location is the cytoplasm. It localises to the cell junction. The protein resides in the cytoplasmic vesicle. It is found in the clathrin-coated vesicle. The protein localises to the cytoskeleton. In terms of biological role, myosins are actin-based motor molecules with ATPase activity. Unconventional myosins serve in intracellular movements. Their highly divergent tails bind to membranous compartments, which are then moved relative to actin filaments. Binds to membranes containing anionic phospholipids via its tail domain. Involved in clathrin-mediated endocytosis and intracellular movement of clathrin-coated vesicles. Required for normal morphology of the glomerular basement membrane, normal development of foot processes by kidney podocytes and normal kidney function. In dendritic cells, may control the movement of class II-containing cytoplasmic vesicles along the actin cytoskeleton by connecting them with the actin network via ARL14EP and ARL14. The sequence is that of Unconventional myosin-Ie (Myo1e) from Mus musculus (Mouse).